Consider the following 416-residue polypeptide: Squalene synthase (416 aa).

The NADP(+) site is built by Arg-52 and Arg-77. Mg(2+) is bound by residues Asp-80, Glu-83, and Asp-84. Arg-218 serves as a coordination point for NADP(+). Residues 284 to 304 (SVFNFCAIPQVMAIATLAACY) form a helical membrane-spanning segment. Residues Lys-315 and Arg-317 each contribute to the NADP(+) site. A helical membrane pass occupies residues 384–404 (PIYLSFIMLLAALSWQYLSTL).

The protein belongs to the phytoene/squalene synthase family. The cofactor is Mg(2+).

It is found in the endoplasmic reticulum membrane. The catalysed reaction is 2 (2E,6E)-farnesyl diphosphate + NADPH + H(+) = squalene + 2 diphosphate + NADP(+). The enzyme catalyses 2 (2E,6E)-farnesyl diphosphate + NADH + H(+) = squalene + 2 diphosphate + NAD(+). It carries out the reaction presqualene diphosphate + NADH + H(+) = squalene + diphosphate + NAD(+). It catalyses the reaction presqualene diphosphate + NADPH + H(+) = squalene + diphosphate + NADP(+). The catalysed reaction is 2 (2E,6E)-farnesyl diphosphate = presqualene diphosphate + diphosphate. The protein operates within terpene metabolism; lanosterol biosynthesis; lanosterol from farnesyl diphosphate: step 1/3. In terms of biological role, catalyzes the condensation of 2 farnesyl pyrophosphate (FPP) moieties to form squalene. Proceeds in two distinct steps. In the first half-reaction, two molecules of FPP react to form the stable presqualene diphosphate intermediate (PSQPP), with concomitant release of a proton and a molecule of inorganic diphosphate. In the second half-reaction, PSQPP undergoes heterolysis, isomerization, and reduction with NADPH or NADH to form squalene. It is the first committed enzyme of the sterol biosynthesis pathway. The polypeptide is Squalene synthase (Fdft1) (Rattus norvegicus (Rat)).